A 451-amino-acid chain; its full sequence is Eukaryotic translation initiation factor 5 (451 aa).

29–36 (GRGNGIKT) provides a ligand contact to GTP. Disordered regions lie at residues 143-233 (LKNP…DDDV) and 263-299 (STEETEKKMKQPTHKDGSTNGSAKEIPNDKPAVTKPS). Residues 147–178 (PEQKKGGKDKKAMRRAEKERLKEGEAADEEQK) show a composition bias toward basic and acidic residues. The segment covering 179–188 (KLKKDAKKKG) has biased composition (basic residues). Composition is skewed to basic and acidic residues over residues 208 to 226 (DEDHSSSPTRSHDGDKAAA) and 266 to 279 (ETEKKMKQPTHKDG). The W2 domain occupies 290–449 (NDKPAVTKPS…QSAESDEEGD (160 aa)).

Belongs to the eIF-2-beta/eIF-5 family.

In terms of biological role, catalyzes the hydrolysis of GTP bound to the 40S ribosomal initiation complex (40S.mRNA.Met-tRNA[F].eIF-2.GTP) with the subsequent joining of a 60S ribosomal subunit resulting in the release of eIF-2 and the guanine nucleotide. The subsequent joining of a 60S ribosomal subunit results in the formation of a functional 80S initiation complex (80S.mRNA.Met-tRNA[F]). In Zea mays (Maize), this protein is Eukaryotic translation initiation factor 5 (EIF5).